We begin with the raw amino-acid sequence, 65 residues long: Diapause-specific peptide (65 aa).

Residues 1–24 (MGAALKMTIFLLIVACAMIATTEA) form the signal peptide. Cystine bridges form between C31-C45, C35-C57, and C46-C64.

Highly expressed in the fat body.

Its subcellular location is the secreted. Functionally, has antifungal activity against T.rubrum. Blocks voltage-dependent N-type calcium channels (Cav2.2 / CACNA1B). This chain is Diapause-specific peptide, found in Gastrophysa atrocyanea (Leaf beetle).